The chain runs to 126 residues: Protein ApaG (126 aa).

In terms of domain architecture, ApaG spans 2–126 (SDPRYQIDVS…FRLAVPGALH (125 aa)).

The protein is Protein ApaG of Pseudomonas putida (strain ATCC 700007 / DSM 6899 / JCM 31910 / BCRC 17059 / LMG 24140 / F1).